The sequence spans 191 residues: uncharacterized protein (191 aa).

This sequence to E.coli YecM.

This is an uncharacterized protein from Haemophilus influenzae (strain ATCC 51907 / DSM 11121 / KW20 / Rd).